We begin with the raw amino-acid sequence, 389 residues long: E3 ubiquitin-protein ligase E3D (389 aa).

Position 2 is an N-acetylalanine (Ala2). Positions Pro129–Asn159 match the BRAT1-like motif motif. Cys144 is a binding site for Zn(2+). The interval Leu235–Cys257 is interaction with UBE2C. The segment at Leu353–Met389 is HECT-like.

In terms of assembly, interacts with UBE2C/UbcH10 (E2 ubiquitin-conjugating enzyme). In vitro, interacts with cyclin-B. Post-translationally, ubiquitinated by UBCH10 (E2 ubiquitin-conjugating enzyme).

It is found in the cytoplasm. It catalyses the reaction S-ubiquitinyl-[E2 ubiquitin-conjugating enzyme]-L-cysteine + [acceptor protein]-L-lysine = [E2 ubiquitin-conjugating enzyme]-L-cysteine + N(6)-ubiquitinyl-[acceptor protein]-L-lysine.. The protein operates within protein modification; protein ubiquitination. Its function is as follows. E3 ubiquitin-protein ligase which accepts ubiquitin from specific E2 ubiquitin-conjugating enzymes, and transfers it to substrates, generally promoting their degradation by the proteasome. Independently of its E3 ubiquitin-protein ligase activity, acts as an inhibitor of CPSF3 endonuclease activity by blocking CPSF3 active site. The sequence is that of E3 ubiquitin-protein ligase E3D (UBE3D) from Bos taurus (Bovine).